An 812-amino-acid polypeptide reads, in one-letter code: Chromosome alignment-maintaining phosphoprotein 1 (812 aa).

Met1 is subject to N-acetylmethionine. The segment covering Ala86–Pro105 has biased composition (basic and acidic residues). Disordered regions lie at residues Ala86 to Pro124 and Lys136 to Arg546. Phosphoserine is present on residues Ser87, Ser108, Ser173, Ser184, Ser204, Ser214, and Ser217. Residues Val202–Val213 are compositionally biased toward pro residues. Polar residues predominate over residues Ala220–Phe233. Phosphoserine occurs at positions 244, 247, 253, 264, 275, 282, 286, 297, 308, 319, 344, 355, 376, 382, and 386. Positions Ala271–Lys490 are mediates interaction with MAD2L2. Over residues Ser284–Ser297 the composition is skewed to pro residues. The span at Pro336–Pro361 shows a compositional bias: pro residues. Over residues Pro363–Ser392 the composition is skewed to low complexity. Thr403 bears the Phosphothreonine mark. Phosphoserine occurs at positions 405, 416, 427, 432, 436, 443, 445, and 452. Residues Leu451–Gln590 form a mediates localization to the spindle and the kinetochore and is required for the attachment of spindle microtubules to the kinetochore region. A Phosphothreonine modification is found at Thr458. Phosphoserine is present on residues Ser459, Ser462, Ser472, and Ser476. The residue at position 490 (Lys490) is an N6-acetyllysine; alternate. Lys490 is covalently cross-linked (Glycyl lysine isopeptide (Lys-Gly) (interchain with G-Cter in SUMO2); alternate). The segment covering Pro499–Ser512 has biased composition (low complexity). Residues Ser507, Ser512, and Ser542 each carry the phosphoserine modification. A Glycyl lysine isopeptide (Lys-Gly) (interchain with G-Cter in SUMO2) cross-link involves residue Lys565. Phosphoserine is present on residues Ser572 and Ser603. Positions Lys591–Ile812 are mediates localization to the chromosome and the spindle and negatively regulates chromosome alignment. Residue Lys606 forms a Glycyl lysine isopeptide (Lys-Gly) (interchain with G-Cter in SUMO2) linkage. 4 positions are modified to phosphoserine: Ser615, Ser626, Ser627, and Ser632. Lys638 is covalently cross-linked (Glycyl lysine isopeptide (Lys-Gly) (interchain with G-Cter in SUMO2)). Phosphoserine occurs at positions 651, 652, and 653. Residue Lys670 forms a Glycyl lysine isopeptide (Lys-Gly) (interchain with G-Cter in SUMO2) linkage. Ser675 is modified (phosphoserine). Lys689 participates in a covalent cross-link: Glycyl lysine isopeptide (Lys-Gly) (interchain with G-Cter in SUMO2). Residue Ser736 is modified to Phosphoserine. The segment at Tyr738–His760 adopts a C2H2-type zinc-finger fold.

Interacts with MAD2L2. Interacts with POGZ, CBX1, CBX3 and CBX5. Post-translationally, phosphorylated by CDK1. Mitotic phosphorylation is required for the attachment of spindle microtubules to the kinetochore.

The protein resides in the nucleus. The protein localises to the chromosome. It is found in the centromere. It localises to the kinetochore. Its subcellular location is the cytoplasm. The protein resides in the cytoskeleton. The protein localises to the spindle. Functionally, required for proper alignment of chromosomes at metaphase and their accurate segregation during mitosis. Involved in the maintenance of spindle microtubules attachment to the kinetochore during sister chromatid biorientation. May recruit CENPE and CENPF to the kinetochore. This chain is Chromosome alignment-maintaining phosphoprotein 1 (CHAMP1), found in Homo sapiens (Human).